The following is a 285-amino-acid chain: Bark agglutinin I polypeptide A (285 aa).

An N-terminal signal peptide occupies residues 1-31 (MTSYNFKTQTSFPLLLSISFFFLLLLNKVNS). N-linked (GlcNAc...) asparagine glycosylation is present at Asn-147. The Mn(2+) site is built by Glu-156 and Asp-158. Residues Asp-158, Phe-160, Asn-162, and Asp-166 each coordinate Ca(2+). Mn(2+) contacts are provided by Asp-166 and His-171. Asn-188 is a glycosylation site (N-linked (GlcNAc...) asparagine).

It belongs to the leguminous lectin family. RPbAI is composed of two polypeptides, A and B, that associate into five different tetrameric isolectins. The A4 combination is the only one devoid of agglutination activity. Isoform B4 displays maximal agglutination activity. Strong expression in seed. Lower levels in the flower, and the bark of the roots. No expression in leaf. The lectin accumulates in the inner bark in autumn.

N-acetyl-D-galactosamine specific lectin. Bark lectins are storage protein that probably maintains stocks of nitrogen during dormant period. Self-aggregatable molecules that can bind their own carbohydrate side chains. They could also play a role in the plant's defense against phytophagous invertebrates or herbivorous higher animals. The chain is Bark agglutinin I polypeptide A from Robinia pseudoacacia (Black locust).